Reading from the N-terminus, the 643-residue chain is Transmembrane 9 superfamily member 4 (643 aa).

The signal sequence occupies residues 1 to 23; that stretch reads MAAAMIWWPRFLLLLCLTCKGST. The Extracellular segment spans residues 24-282; that stretch reads FYVPGVAPIN…TMSDVQIHWF (259 aa). A helical membrane pass occupies residues 283–303; sequence SIINSVVVVFFLSGILSMIII. The Cytoplasmic segment spans residues 304–347; sequence RTLRKDIANYNKEDDIEDTMEESGWKLVHGDVFRPPQYPMILSS. Y313 is subject to Phosphotyrosine. A helical membrane pass occupies residues 348–368; sequence LLGSGIQLFCMILIVIFVAML. At 369 to 377 the chain is on the extracellular side; the sequence is GMLSPSSRG. The helical transmembrane segment at 378–398 threads the bilayer; sequence ALMTTACFLFMFMGVFGGFSA. Over 399-417 the chain is Cytoplasmic; the sequence is GRLYRTLKGHRWKKGAFCT. Residues 418 to 438 traverse the membrane as a helical segment; the sequence is ATLYPGVVFGICFVLNCFIWG. The Extracellular segment spans residues 439-450; that stretch reads KHSSGAVPFPTM. Residues 451–471 form a helical membrane-spanning segment; sequence VALLCMWFGISLPLVYLGYYF. Residues 472 to 502 lie on the Cytoplasmic side of the membrane; that stretch reads GFRKQPYDNPVRTNQIPRQIPEQRWYMNRFV. A helical membrane pass occupies residues 503–523; sequence GILMAGILPFGAMFIELFFIF. Residues 524-536 lie on the Extracellular side of the membrane; it reads SAIWENQFYYLFG. A helical membrane pass occupies residues 537-557; that stretch reads FLFLVFIILVVSCSQISIVMV. Over 558–571 the chain is Cytoplasmic; the sequence is YFQLCAEDYRWWWR. A helical membrane pass occupies residues 572-592; the sequence is NFLVSGGSAFYVLVYAIFYFV. Topologically, residues 593–599 are extracellular; sequence NKLDIVE. Residues 600-620 traverse the membrane as a helical segment; that stretch reads FIPSLLYFGYTTLMVLSFWLL. The Cytoplasmic segment spans residues 621–643; the sequence is TGTIGFYAAYMFVRKIYAAVKID.

It belongs to the nonaspanin (TM9SF) (TC 9.A.2) family.

It localises to the membrane. Its subcellular location is the golgi apparatus. The protein resides in the early endosome. Its function is as follows. Associates with proteins harboring glycine-rich transmembrane domains and ensures their efficient localization to the cell surface. The chain is Transmembrane 9 superfamily member 4 (Tm9sf4) from Mus musculus (Mouse).